A 537-amino-acid chain; its full sequence is Protein pns1 (537 aa).

The span at Met-1 to Gly-16 shows a compositional bias: polar residues. Residues Met-1 to Asn-35 form a disordered region. Residues Met-1–Asp-81 are Cytoplasmic-facing. The span at Gln-23 to Asn-35 shows a compositional bias: low complexity. The chain crosses the membrane as a helical span at residues Ile-82–Ala-102. The Extracellular portion of the chain corresponds to Ile-103 to Thr-130. Residues Leu-131–Gly-151 traverse the membrane as a helical segment. Topologically, residues Ala-152–Leu-158 are cytoplasmic. A helical membrane pass occupies residues Phe-159–Ile-179. The Extracellular portion of the chain corresponds to Ala-180 to Tyr-184. A helical transmembrane segment spans residues Gly-185–Ile-205. At Pro-206–His-227 the chain is on the cytoplasmic side. Residues Met-228–Val-248 form a helical membrane-spanning segment. The Extracellular segment spans residues Thr-249–Arg-275. The helical transmembrane segment at Ala-276 to Leu-296 threads the bilayer. At Lys-297 to Ala-333 the chain is on the cytoplasmic side. Residues Thr-334–Leu-354 traverse the membrane as a helical segment. Residues Arg-355–Ser-370 lie on the Extracellular side of the membrane. A helical transmembrane segment spans residues Ile-371 to Val-391. The Cytoplasmic segment spans residues Thr-392–Cys-432. A helical membrane pass occupies residues Leu-433–Ala-453. Topologically, residues Tyr-454 to Asn-469 are extracellular. Asn-469 carries N-linked (GlcNAc...) asparagine glycosylation. The helical transmembrane segment at Phe-470 to Met-490 threads the bilayer. Residues Thr-491–Ala-537 are Cytoplasmic-facing.

This sequence belongs to the CTL (choline transporter-like) family.

Its subcellular location is the cell membrane. Probably involved in transport through the plasma membrane. This Aspergillus fumigatus (strain ATCC MYA-4609 / CBS 101355 / FGSC A1100 / Af293) (Neosartorya fumigata) protein is Protein pns1 (pns1).